Consider the following 156-residue polypeptide: 6,7-dimethyl-8-ribityllumazine synthase (156 aa).

5-amino-6-(D-ribitylamino)uracil is bound by residues F23, 57–59 (AFE), and 81–83 (AII). 86 to 87 (ST) lines the (2S)-2-hydroxy-3-oxobutyl phosphate pocket. H89 acts as the Proton donor in catalysis. F114 contacts 5-amino-6-(D-ribitylamino)uracil. (2S)-2-hydroxy-3-oxobutyl phosphate is bound at residue R128.

The protein belongs to the DMRL synthase family.

It carries out the reaction (2S)-2-hydroxy-3-oxobutyl phosphate + 5-amino-6-(D-ribitylamino)uracil = 6,7-dimethyl-8-(1-D-ribityl)lumazine + phosphate + 2 H2O + H(+). The protein operates within cofactor biosynthesis; riboflavin biosynthesis; riboflavin from 2-hydroxy-3-oxobutyl phosphate and 5-amino-6-(D-ribitylamino)uracil: step 1/2. Its function is as follows. Catalyzes the formation of 6,7-dimethyl-8-ribityllumazine by condensation of 5-amino-6-(D-ribitylamino)uracil with 3,4-dihydroxy-2-butanone 4-phosphate. This is the penultimate step in the biosynthesis of riboflavin. This is 6,7-dimethyl-8-ribityllumazine synthase from Wolinella succinogenes (strain ATCC 29543 / DSM 1740 / CCUG 13145 / JCM 31913 / LMG 7466 / NCTC 11488 / FDC 602W) (Vibrio succinogenes).